We begin with the raw amino-acid sequence, 570 residues long: Interleukin-1 receptor accessory protein (570 aa).

Residues 1–20 (MTLLWCVVSLYFYGILQSDA) form the signal peptide. Ig-like C2-type domains follow at residues 21–128 (SERC…VAFP), 136–226 (SCFN…FHLT), and 242–350 (PPVI…VKQK). Topologically, residues 21–367 (SERCDDWGLD…VELACGFGAT (347 aa)) are extracellular. Disulfide bonds link Cys-24-Cys-122, Cys-47-Cys-114, Cys-137-Cys-181, Cys-160-Cys-212, and Cys-266-Cys-332. N-linked (GlcNAc...) asparagine glycosylation is present at Asn-57. Positions 69–85 (IWYWTRQDRDLEEPINF) are essential for interaction with PTPRD. N-linked (GlcNAc...) asparagine glycans are attached at residues Asn-107, Asn-111, and Asn-118. Residues Asn-196, Asn-209, and Asn-299 are each glycosylated (N-linked (GlcNAc...) asparagine). Residues 368-388 (VLLVVILIVVYHVYWLEMVLF) traverse the membrane as a helical segment. Over 389–570 (YRAHFGTDET…GLSYSSLKNV (182 aa)) the chain is Cytoplasmic. The TIR domain maps to 403–546 (KEYDIYVSYA…RFWKQLQVAM (144 aa)). Glu-482 is an active-site residue. The interval 549–570 (KKSPRRSSSDEQGLSYSSLKNV) is disordered. The residue at position 557 (Ser-557) is a Phosphoserine. Residues 558–570 (DEQGLSYSSLKNV) show a composition bias toward polar residues.

The protein belongs to the interleukin-1 receptor family. As to quaternary structure, the interleukin-36 receptor complex is a heterodimer of IL1RL2 and IL1RAP; the association is inhibited by IL36RN. The interleukin-1 receptor complex is a heterodimer of IL1R1 and IL1RAP. Associates with IL1R2 to form a non-signaling interleukin-1 receptor complex. Interacts with IL-33-bound IL1RL1 to form the minimal interleukin-33 signaling complex with a 1:1:1 stoichiometry. Interacts with KIT (independently of stimulation with KITLG/SCF). A mast cell-specific KITLG/SCF-induced interleukin-33 signaling complex contains IL1RL1, IL1RAP, KIT and MYD88. Interacts (via the first immunoglobilin domain) with PTPRD (via the third immunoglobilin domain); induces pre- and postsynaptic differentiation of neurons.

The protein resides in the cell membrane. It is found in the secreted. The catalysed reaction is NAD(+) + H2O = ADP-D-ribose + nicotinamide + H(+). Functionally, coreceptor for IL1RL2 in the IL-36 signaling system. Coreceptor with IL1R1 in the IL-1 signaling system. Associates with IL1R1 bound to IL1B to form the high affinity interleukin-1 receptor complex which mediates interleukin-1-dependent activation of NF-kappa-B and other pathways. Signaling involves the recruitment of adapter molecules such as TOLLIP, MYD88, and IRAK1 or IRAK2 via the respective TIR domains of the receptor/coreceptor subunits. Recruits TOLLIP to the signaling complex. Does not bind to interleukin-1 alone; binding of IL1RN to IL1R1, prevents its association with IL1R1 to form a signaling complex. The cellular response is modulated through a non-signaling association with the membrane IL1R2 decoy receptor. Coreceptor for IL1RL1 in the IL-33 signaling system. Can bidirectionally induce pre- and postsynaptic differentiation of neurons by trans-synaptically binding to PTPRD. May play a role in IL1B-mediated costimulation of IFNG production from T-helper 1 (Th1) cells. Associates with secreted ligand-bound IL1R2 and increases the affinity of secreted IL1R2 for IL1B; this complex formation may be the dominant mechanism for neutralization of IL1B by secreted/soluble receptors. Enhances the ability of secreted IL1R1 to inhibit IL-33 signaling. The sequence is that of Interleukin-1 receptor accessory protein (IL1RAP) from Macaca mulatta (Rhesus macaque).